We begin with the raw amino-acid sequence, 197 residues long: Holliday junction branch migration complex subunit RuvA (197 aa).

The domain I stretch occupies residues 1 to 64 (MIALLRGLVV…EDVLALYGFL (64 aa)). Positions 65 to 143 (TQDEKALFEK…AATGEEPGAP (79 aa)) are domain II. The tract at residues 144–153 (AAEALSPIDQ) is flexible linker. The segment at 153–197 (QDVLSALLNLGCARPQAEAAVRKAKAAGASLDFEPLFRRALELVR) is domain III.

The protein belongs to the RuvA family. Homotetramer. Forms an RuvA(8)-RuvB(12)-Holliday junction (HJ) complex. HJ DNA is sandwiched between 2 RuvA tetramers; dsDNA enters through RuvA and exits via RuvB. An RuvB hexamer assembles on each DNA strand where it exits the tetramer. Each RuvB hexamer is contacted by two RuvA subunits (via domain III) on 2 adjacent RuvB subunits; this complex drives branch migration. In the full resolvosome a probable DNA-RuvA(4)-RuvB(12)-RuvC(2) complex forms which resolves the HJ.

It localises to the cytoplasm. In terms of biological role, the RuvA-RuvB-RuvC complex processes Holliday junction (HJ) DNA during genetic recombination and DNA repair, while the RuvA-RuvB complex plays an important role in the rescue of blocked DNA replication forks via replication fork reversal (RFR). RuvA specifically binds to HJ cruciform DNA, conferring on it an open structure. The RuvB hexamer acts as an ATP-dependent pump, pulling dsDNA into and through the RuvAB complex. HJ branch migration allows RuvC to scan DNA until it finds its consensus sequence, where it cleaves and resolves the cruciform DNA. The chain is Holliday junction branch migration complex subunit RuvA from Solibacter usitatus (strain Ellin6076).